Here is a 1396-residue protein sequence, read N- to C-terminus: DNA-directed RNA polymerase subunit beta' (1396 aa).

Zn(2+)-binding residues include Cys73, Cys75, Cys88, and Cys91. Residues Asp467, Asp469, and Asp471 each coordinate Mg(2+). The Zn(2+) site is built by Cys817, Cys891, Cys898, and Cys901.

Belongs to the RNA polymerase beta' chain family. The RNAP catalytic core consists of 2 alpha, 1 beta, 1 beta' and 1 omega subunit. When a sigma factor is associated with the core the holoenzyme is formed, which can initiate transcription. It depends on Mg(2+) as a cofactor. Zn(2+) is required as a cofactor.

It catalyses the reaction RNA(n) + a ribonucleoside 5'-triphosphate = RNA(n+1) + diphosphate. Functionally, DNA-dependent RNA polymerase catalyzes the transcription of DNA into RNA using the four ribonucleoside triphosphates as substrates. The sequence is that of DNA-directed RNA polymerase subunit beta' from Orientia tsutsugamushi (strain Boryong) (Rickettsia tsutsugamushi).